A 160-amino-acid chain; its full sequence is Phosphopantetheine adenylyltransferase (160 aa).

Ser-10 is a binding site for substrate. ATP is bound by residues 10-11 (SF) and His-18. Residues Lys-42, Thr-74, and Arg-88 each contribute to the substrate site. ATP contacts are provided by residues 89-91 (GLR), Glu-99, and 124-130 (YSFISST).

It belongs to the bacterial CoaD family. In terms of assembly, homohexamer. The cofactor is Mg(2+).

Its subcellular location is the cytoplasm. It catalyses the reaction (R)-4'-phosphopantetheine + ATP + H(+) = 3'-dephospho-CoA + diphosphate. Its pathway is cofactor biosynthesis; coenzyme A biosynthesis; CoA from (R)-pantothenate: step 4/5. Its function is as follows. Reversibly transfers an adenylyl group from ATP to 4'-phosphopantetheine, yielding dephospho-CoA (dPCoA) and pyrophosphate. The sequence is that of Phosphopantetheine adenylyltransferase from Leptospira borgpetersenii serovar Hardjo-bovis (strain L550).